A 200-amino-acid chain; its full sequence is Glycerol-3-phosphate acyltransferase (200 aa).

A run of 5 helical transmembrane segments spans residues 2-22 (FNIS…AVIV), 51-71 (KAAA…VLLA), 84-104 (AIAA…FFGF), 114-134 (LGVL…IWLV), and 159-179 (FFMP…LVLF).

The protein belongs to the PlsY family. In terms of assembly, probably interacts with PlsX.

It localises to the cell inner membrane. It carries out the reaction an acyl phosphate + sn-glycerol 3-phosphate = a 1-acyl-sn-glycero-3-phosphate + phosphate. Its pathway is lipid metabolism; phospholipid metabolism. In terms of biological role, catalyzes the transfer of an acyl group from acyl-phosphate (acyl-PO(4)) to glycerol-3-phosphate (G3P) to form lysophosphatidic acid (LPA). This enzyme utilizes acyl-phosphate as fatty acyl donor, but not acyl-CoA or acyl-ACP. The chain is Glycerol-3-phosphate acyltransferase from Neisseria meningitidis serogroup C (strain 053442).